A 349-amino-acid chain; its full sequence is RING-H2 finger protein ATL48 (349 aa).

The HIG1 domain occupies 1–85; sequence MSSVEPDMED…DNPWKKLLLS (85 aa). S2 bears the N-acetylserine mark. Transmembrane regions (helical) follow at residues 21–41, 55–75, and 121–141; these read PLVP…LISF, ARVV…YYYG, and CLVI…YLIF. The segment at 207-249 adopts an RING-type; atypical zinc-finger fold; the sequence is CAVCLNEFSDTDKLRLLPVCSHAFHLHCIDTWLLSNSTCPLCR.

Belongs to the RING-type zinc finger family. ATL subfamily.

The protein localises to the membrane. The catalysed reaction is S-ubiquitinyl-[E2 ubiquitin-conjugating enzyme]-L-cysteine + [acceptor protein]-L-lysine = [E2 ubiquitin-conjugating enzyme]-L-cysteine + N(6)-ubiquitinyl-[acceptor protein]-L-lysine.. It functions in the pathway protein modification; protein ubiquitination. The chain is RING-H2 finger protein ATL48 (ATL48) from Arabidopsis thaliana (Mouse-ear cress).